Consider the following 278-residue polypeptide: Energy-coupling factor transporter ATP-binding protein EcfA (278 aa).

The region spanning 5 to 240 is the ABC transporter domain; that stretch reads LETKNLVYNY…KEVIDEADLR (236 aa). 38-45 lines the ATP pocket; the sequence is GHNGAGKS.

The protein belongs to the ABC transporter superfamily. Energy-coupling factor EcfA family. In terms of assembly, forms a stable energy-coupling factor (ECF) transporter complex composed of 2 membrane-embedded substrate-binding proteins (S component), 2 ATP-binding proteins (A component) and 2 transmembrane proteins (T component).

Its subcellular location is the cell membrane. Functionally, ATP-binding (A) component of a common energy-coupling factor (ECF) ABC-transporter complex. Unlike classic ABC transporters this ECF transporter provides the energy necessary to transport a number of different substrates. The polypeptide is Energy-coupling factor transporter ATP-binding protein EcfA (Methanosphaera stadtmanae (strain ATCC 43021 / DSM 3091 / JCM 11832 / MCB-3)).